Reading from the N-terminus, the 101-residue chain is UPF0134 protein MPN_675 (101 aa).

This sequence belongs to the UPF0134 family.

The polypeptide is UPF0134 protein MPN_675 (Mycoplasma pneumoniae (strain ATCC 29342 / M129 / Subtype 1) (Mycoplasmoides pneumoniae)).